We begin with the raw amino-acid sequence, 188 residues long: dCTP deaminase (188 aa).

Residues 111-116, 135-137, glutamine 156, tyrosine 170, and glutamine 180 contribute to the dCTP site; these read KSTYAR and TLE. The active-site Proton donor/acceptor is glutamate 137.

Belongs to the dCTP deaminase family. In terms of assembly, homotrimer.

The catalysed reaction is dCTP + H2O + H(+) = dUTP + NH4(+). Its pathway is pyrimidine metabolism; dUMP biosynthesis; dUMP from dCTP (dUTP route): step 1/2. In terms of biological role, catalyzes the deamination of dCTP to dUTP. This is dCTP deaminase from Nitrosomonas europaea (strain ATCC 19718 / CIP 103999 / KCTC 2705 / NBRC 14298).